Consider the following 402-residue polypeptide: Myb-related protein 1 (402 aa).

The region spanning 42-102 (TDAKPRLKWT…HLQKYRLSKN (61 aa)) is the HTH myb-type domain. The segment at residues 73–98 (PKTIMKVMGIPGLTLYHLKSHLQKYR) is a DNA-binding region (H-T-H motif). Residues 148–168 (SDALQMQIEVQRRLHEQLEVQ) adopt a coiled-coil conformation. The short motif at 161-166 (LHEQLE) is the LHEQLE element. Over residues 238–260 (QQMQKTYPPNSSLDSCLTSSEGT) the composition is skewed to polar residues. Disordered stretches follow at residues 238–266 (QQMQKTYPPNSSLDSCLTSSEGTQKAPKM), 344–363 (EHRGRSSNNSEYTEERFNEN), and 382–402 (HDENYGTTRPKQFDLNGFSWN).

The protein belongs to the MYB-CC family. In terms of assembly, isoforms 1 and 2: homodimer. Isoform 3: loss of dimerization. In terms of tissue distribution, expressed in phloem and/or cambium.

Its subcellular location is the nucleus. Transcription factor that may act on the GAL1 promoter. Acts redundantly with MYR2 as a repressor of flowering and organ elongation under decreased light intensity. Represses gibberellic acid (GA)-dependent responses and affects levels of bioactive GA. The chain is Myb-related protein 1 from Arabidopsis thaliana (Mouse-ear cress).